The sequence spans 275 residues: Methylglyoxal reductase DkgA (275 aa).

Y51 functions as the Proton donor in the catalytic mechanism. Substrate is bound at residue H107. Residue 187–241 participates in NADP(+) binding; sequence SPLAQGGKGVFDQKVIRDLADKYGKTPAQIVIRWHLDSGLVVIPKSVTPSRIAEN.

The protein belongs to the aldo/keto reductase family. As to quaternary structure, monomer.

It localises to the cytoplasm. The catalysed reaction is hydroxyacetone + NADP(+) = methylglyoxal + NADPH + H(+). It catalyses the reaction a primary alcohol + NADP(+) = an aldehyde + NADPH + H(+). It carries out the reaction 2-dehydro-L-idonate + NADP(+) = 2,5-didehydro-D-gluconate + NADPH + H(+). Functionally, aldo-keto reductase that significantly contributes to cellular methylglyoxal detoxification by catalyzing the NADPH-dependent conversion of methylglyoxal to acetol. It also exhibits fairly high activity with glyoxal. Shows broad specificity and can use aromatic aldehydes such as 4-nitrobenzaldehyde, 3-nitrobenzaldehyde and benzaldehyde, and phenylglyoxal. Shows beta-keto ester reductase activity toward ethyl acetoacetate and a variety of 2-substituted derivatives. Also catalyzes the reduction of 2,5-diketo-D-gluconic acid (25DKG) to 2-keto-L-gulonic acid (2KLG) and could be involved in ketogluconate metabolism. However, the specific activity of the enzyme toward 2,5-diketo-D-gluconate was reported to be almost 400-fold lower than its activity toward methylglyoxal. Can catalyze in vitro the NADPH-dependent reduction of furfural, a natural product of lignocellulosic decomposition, to the less toxic product, furfuryl alcohol. However, it is unlikely that furfural is a physiological substrate. This chain is Methylglyoxal reductase DkgA, found in Escherichia coli (strain K12).